A 95-amino-acid chain; its full sequence is MNIRPLHDRVIVERQESESKSAGGIVLTGSAAEKSTRGIILAVGNGRILENGSVQPLDVKVGDSVIFAEGNIKAEKIDGKEVLIMSEYNILAIVE.

The protein belongs to the GroES chaperonin family. In terms of assembly, heptamer of 7 subunits arranged in a ring. Interacts with the chaperonin GroEL.

The protein localises to the cytoplasm. Its function is as follows. Together with the chaperonin GroEL, plays an essential role in assisting protein folding. The GroEL-GroES system forms a nano-cage that allows encapsulation of the non-native substrate proteins and provides a physical environment optimized to promote and accelerate protein folding. GroES binds to the apical surface of the GroEL ring, thereby capping the opening of the GroEL channel. The sequence is that of Co-chaperonin GroES from Aliivibrio salmonicida (strain LFI1238) (Vibrio salmonicida (strain LFI1238)).